A 128-amino-acid polypeptide reads, in one-letter code: Large ribosomal subunit protein uL22 (128 aa).

The protein belongs to the universal ribosomal protein uL22 family. As to quaternary structure, part of the 50S ribosomal subunit.

Functionally, this protein binds specifically to 23S rRNA; its binding is stimulated by other ribosomal proteins, e.g. L4, L17, and L20. It is important during the early stages of 50S assembly. It makes multiple contacts with different domains of the 23S rRNA in the assembled 50S subunit and ribosome. The globular domain of the protein is located near the polypeptide exit tunnel on the outside of the subunit, while an extended beta-hairpin is found that lines the wall of the exit tunnel in the center of the 70S ribosome. This Rhodopseudomonas palustris (strain BisA53) protein is Large ribosomal subunit protein uL22.